Reading from the N-terminus, the 153-residue chain is Deoxyuridine 5'-triphosphate nucleotidohydrolase (153 aa).

Substrate is bound by residues arginine 65 to glycine 67, asparagine 78, and threonine 82 to aspartate 84. A disordered region spans residues methionine 132–histidine 153.

Belongs to the dUTPase family. The cofactor is Mg(2+).

The enzyme catalyses dUTP + H2O = dUMP + diphosphate + H(+). The protein operates within pyrimidine metabolism; dUMP biosynthesis; dUMP from dCTP (dUTP route): step 2/2. This enzyme is involved in nucleotide metabolism: it produces dUMP, the immediate precursor of thymidine nucleotides and it decreases the intracellular concentration of dUTP so that uracil cannot be incorporated into DNA. This chain is Deoxyuridine 5'-triphosphate nucleotidohydrolase, found in Chlorobium limicola (strain DSM 245 / NBRC 103803 / 6330).